A 314-amino-acid chain; its full sequence is uncharacterized protein (314 aa).

This is an uncharacterized protein from Acanthamoeba polyphaga mimivirus (APMV).